The following is a 34-amino-acid chain: Mytilin-A (34 aa).

4 disulfides stabilise this stretch: C2-C27, C6-C29, C10-C31, and C15-C34.

It is found in the secreted. Functionally, has antibacterial activity against A.viridans, B.megaterium, M.luteus, E.faecalis, S.aureus and E.coli. It is active against the marine species A.carrageenovora, P.alginovora and C.drobachiensis. The polypeptide is Mytilin-A (Mytilus edulis (Blue mussel)).